Reading from the N-terminus, the 207-residue chain is MTLPDFRLIRLLPLASLVLTACTLPGHKGPGKSPDSPQWRQHQQEVRHLNQYQTRGAFAYISDDQKVYARFFWQQTGQDRYRLLLTNPLGSTELELNAQPGNVQLVDNKGQRYTADDAEEMIGKLTGMPIPLNSLRQWILGLPGDATDYKLDDQYRLSEVNYHQDGKNWKVVYGGYDSKTQPAMPANMELSDGSQRIKLKMDNWIVK.

An N-terminal signal peptide occupies residues 1–21; it reads MTLPDFRLIRLLPLASLVLTA. Cysteine 22 carries the N-palmitoyl cysteine lipid modification. The S-diacylglycerol cysteine moiety is linked to residue cysteine 22.

It belongs to the LolB family. In terms of assembly, monomer.

It localises to the cell outer membrane. Its function is as follows. Plays a critical role in the incorporation of lipoproteins in the outer membrane after they are released by the LolA protein. The chain is Outer-membrane lipoprotein LolB from Salmonella typhi.